A 78-amino-acid polypeptide reads, in one-letter code: Large ribosomal subunit protein bL28 (78 aa).

The protein belongs to the bacterial ribosomal protein bL28 family.

This chain is Large ribosomal subunit protein bL28, found in Edwardsiella ictaluri (strain 93-146).